The sequence spans 116 residues: Large ribosomal subunit protein uL14m (116 aa).

It belongs to the universal ribosomal protein uL14 family.

It localises to the mitochondrion. The protein is Large ribosomal subunit protein uL14m (RPL14) of Acanthamoeba polyphaga (Amoeba).